The following is a 374-amino-acid chain: Protein-glutamate methylesterase/protein-glutamine glutaminase (374 aa).

Positions 4-121 constitute a Response regulatory domain; it reads KVLVVDDSGF…SRNPDKVKQM (118 aa). Asp55 carries the 4-aspartylphosphate modification. A disordered region spans residues 144 to 186; that stretch reads PVAAPVPASSPAPASSFASPAPARPAATARAAAPAASHSPAPK. Residues 154–183 are compositionally biased toward low complexity; that stretch reads PAPASSFASPAPARPAATARAAAPAASHSP. One can recognise a CheB-type methylesterase domain in the interval 183–374; the sequence is PAPKRKPYKL…IGKHLVEACV (192 aa). Active-site residues include Ser198, His225, and Asp318.

This sequence belongs to the CheB family. Phosphorylated by CheA. Phosphorylation of the N-terminal regulatory domain activates the methylesterase activity.

It localises to the cytoplasm. The catalysed reaction is [protein]-L-glutamate 5-O-methyl ester + H2O = L-glutamyl-[protein] + methanol + H(+). It carries out the reaction L-glutaminyl-[protein] + H2O = L-glutamyl-[protein] + NH4(+). In terms of biological role, involved in chemotaxis. Part of a chemotaxis signal transduction system that modulates chemotaxis in response to various stimuli. Catalyzes the demethylation of specific methylglutamate residues introduced into the chemoreceptors (methyl-accepting chemotaxis proteins or MCP) by CheR. Also mediates the irreversible deamidation of specific glutamine residues to glutamic acid. This chain is Protein-glutamate methylesterase/protein-glutamine glutaminase, found in Pseudomonas putida (Arthrobacter siderocapsulatus).